A 387-amino-acid polypeptide reads, in one-letter code: Carbamoyl phosphate synthase small chain (387 aa).

The tract at residues 1 to 196 (MEGVLSQLAV…FSINKQKFLF (196 aa)) is CPSase. The L-glutamine site is built by S51, G245, and G247. Positions 197–384 (HVVVYDFGVK…IKLIVSQKTT (188 aa)) constitute a Glutamine amidotransferase type-1 domain. The active-site Nucleophile is C273. Residues L274, Q277, N315, and F318 each contribute to the L-glutamine site. Catalysis depends on residues H357 and E359.

It belongs to the CarA family. As to quaternary structure, composed of two chains; the small (or glutamine) chain promotes the hydrolysis of glutamine to ammonia, which is used by the large (or ammonia) chain to synthesize carbamoyl phosphate. Tetramer of heterodimers (alpha,beta)4.

The catalysed reaction is hydrogencarbonate + L-glutamine + 2 ATP + H2O = carbamoyl phosphate + L-glutamate + 2 ADP + phosphate + 2 H(+). The enzyme catalyses L-glutamine + H2O = L-glutamate + NH4(+). The protein operates within amino-acid biosynthesis; L-arginine biosynthesis; carbamoyl phosphate from bicarbonate: step 1/1. It functions in the pathway pyrimidine metabolism; UMP biosynthesis via de novo pathway; (S)-dihydroorotate from bicarbonate: step 1/3. Its function is as follows. Small subunit of the glutamine-dependent carbamoyl phosphate synthetase (CPSase). CPSase catalyzes the formation of carbamoyl phosphate from the ammonia moiety of glutamine, carbonate, and phosphate donated by ATP, constituting the first step of 2 biosynthetic pathways, one leading to arginine and/or urea and the other to pyrimidine nucleotides. The small subunit (glutamine amidotransferase) binds and cleaves glutamine to supply the large subunit with the substrate ammonia. The sequence is that of Carbamoyl phosphate synthase small chain from Buchnera aphidicola subsp. Acyrthosiphon pisum (strain APS) (Acyrthosiphon pisum symbiotic bacterium).